A 256-amino-acid polypeptide reads, in one-letter code: Ethylene-responsive transcription factor ERF084 (256 aa).

Residues 115–172 constitute a DNA-binding region (AP2/ERF); sequence GFMGVRKRPWGRWSAEIRDRIGRCRHWLGTFDTAEEAARAYDAAARRLRGTKAKTNFV.

The protein belongs to the AP2/ERF transcription factor family. ERF subfamily.

It is found in the nucleus. Functionally, probably acts as a transcriptional activator. Binds to the GCC-box pathogenesis-related promoter element. May be involved in the regulation of gene expression by stress factors and by components of stress signal transduction pathways. In Arabidopsis thaliana (Mouse-ear cress), this protein is Ethylene-responsive transcription factor ERF084 (ERF084).